The following is a 215-amino-acid chain: 3-isopropylmalate dehydratase small subunit (215 aa).

Belongs to the LeuD family. LeuD type 1 subfamily. As to quaternary structure, heterodimer of LeuC and LeuD.

It carries out the reaction (2R,3S)-3-isopropylmalate = (2S)-2-isopropylmalate. It functions in the pathway amino-acid biosynthesis; L-leucine biosynthesis; L-leucine from 3-methyl-2-oxobutanoate: step 2/4. Catalyzes the isomerization between 2-isopropylmalate and 3-isopropylmalate, via the formation of 2-isopropylmaleate. The sequence is that of 3-isopropylmalate dehydratase small subunit from Acinetobacter baumannii (strain AB307-0294).